Here is a 350-residue protein sequence, read N- to C-terminus: MDINLFDFHLPEELIAQVPLEDRETSRLMVLDRETGDIEHKHFTDILSYLHEGDCLVLNETKVMPARLHGVKEDTGAHIEVLLLKQEEGDKWETLVKPAKRVKEGTVISFGEGKLKATCTGTADQGGRQLEFSYDGIFYEILDELGEMPLPPYIKETLEDRDRYQTVYAKEIGSAAAPTAGLHFTEELLEKLKQKGVQLAFITLHVGLGTFRPVSADTIEEHHMHAEYYHMSEETAALLNRVKENGGRIITVGTTSTRTLETIATDHNGKLCAASGWTDIFMYPGYEFKAIDGLITNFHLPKSTLIMLVSAFANRDNVLHAYNEAVKEKYRFFSFGDAMFVASHAKMRNK.

It belongs to the QueA family. In terms of assembly, monomer.

The protein resides in the cytoplasm. The catalysed reaction is 7-aminomethyl-7-carbaguanosine(34) in tRNA + S-adenosyl-L-methionine = epoxyqueuosine(34) in tRNA + adenine + L-methionine + 2 H(+). It functions in the pathway tRNA modification; tRNA-queuosine biosynthesis. Functionally, transfers and isomerizes the ribose moiety from AdoMet to the 7-aminomethyl group of 7-deazaguanine (preQ1-tRNA) to give epoxyqueuosine (oQ-tRNA). This chain is S-adenosylmethionine:tRNA ribosyltransferase-isomerase, found in Bacillus cereus (strain G9842).